The sequence spans 318 residues: Transaldolase (318 aa).

Residue Lys-132 is the Schiff-base intermediate with substrate of the active site.

It belongs to the transaldolase family. Type 1 subfamily. As to quaternary structure, homodimer.

It is found in the cytoplasm. It catalyses the reaction D-sedoheptulose 7-phosphate + D-glyceraldehyde 3-phosphate = D-erythrose 4-phosphate + beta-D-fructose 6-phosphate. It functions in the pathway carbohydrate degradation; pentose phosphate pathway; D-glyceraldehyde 3-phosphate and beta-D-fructose 6-phosphate from D-ribose 5-phosphate and D-xylulose 5-phosphate (non-oxidative stage): step 2/3. Its function is as follows. Transaldolase is important for the balance of metabolites in the pentose-phosphate pathway. The protein is Transaldolase of Shewanella baltica (strain OS155 / ATCC BAA-1091).